We begin with the raw amino-acid sequence, 866 residues long: MVSNGHFAYAEDDPVASYEHGVQVVDEDKEFNPNLSKYLAYEGVTPAGFNYHLISVFGSQSTGKSTLLNYLFGTHFSVMSETERRQTTKGIWMSKNKRQDCERENSLPHLQNNRMADNILVMDVEGTDGRERGEDQDFERKSALFALATSEVLIVNIWEHQVGLYQGANMGLLKTVFEVNMQLFLKDKKSTPRSLLFFVIRDFLGTTPLQNLQNTLMQDLQRIWTSLSKPPGLENSTIEDYFDFEFAALPHKNFQTDKFVAEVKKLSMRFREGHRDPSKGNKTEGGIFLSEYHRRIPADGFAVYAEGIWDQIVNNKDLDLPTQQELLAQFRCDEISREVLVAFDEAVVPFETKQAEAAQSGNPEVFAGLGPAMKNARVKTLSAFETEASRYHKRVFQMKRAELEDKMDTRLKVLFSGQLTAAHKSGIAQFSDAVSAAVKAGQKKGASYDFADIVNKEKRIALERFEDDAKATVIEGACWSNYTQELALYQKDLEKISAQLRKDEMRRLATRVERWVRSRLGESVGLEFNALGSGRGGSGAPETGDKPSEDTIWDRIWSIFVATVLEAEQRFTERASSFDASLEEVDVGLWRLRRKAWGVLRSKIDEEMMEGNLLLKLRENFEDKFRYDSAGVPRIWRPTDDIEGLYTKARESTLTLIPLLSRFRLQETNATPQLDRWVGYTPSAATPADEEDLVPIGGVDDDGKSLEEEMTMLSETKRQDLTVRFKKAADGVYVEAKRSAIGGMTQIPVYFYILLLALGWNEIIAVLRNPVYFFMLFLCSVAAYIIYQLNLWGPMVKMAEAASHQAVEEGKKRLRDLLEPSDIGHHGMKYKNGTEQYEMSHVRSGRNATKINERDDDDEVEGEETW.

The Cytoplasmic portion of the chain corresponds to 1-746; it reads MVSNGHFAYA…KRSAIGGMTQ (746 aa). A GB1/RHD3-type G domain is found at 48–305; the sequence is GFNYHLISVF…IPADGFAVYA (258 aa). 58–65 lines the GTP pocket; it reads GSQSTGKS. The stretch at 480–506 forms a coiled coil; that stretch reads SNYTQELALYQKDLEKISAQLRKDEMR. The helical transmembrane segment at 747 to 767 threads the bilayer; it reads IPVYFYILLLALGWNEIIAVL. The Lumenal segment spans residues 768–770; that stretch reads RNP. A helical transmembrane segment spans residues 771-791; sequence VYFFMLFLCSVAAYIIYQLNL. At 792–866 the chain is on the cytoplasmic side; sequence WGPMVKMAEA…DDEVEGEETW (75 aa). Residues 840–866 form a disordered region; it reads SHVRSGRNATKINERDDDDEVEGEETW. Residues 854–866 show a composition bias toward acidic residues; sequence RDDDDEVEGEETW.

This sequence belongs to the TRAFAC class dynamin-like GTPase superfamily. GB1/RHD3 GTPase family. RHD3 subfamily.

It localises to the endoplasmic reticulum membrane. In terms of biological role, cooperates with the reticulon proteins and tubule-shaping DP1 family proteins to generate and maintain the structure of the tubular endoplasmic reticulum network. Has GTPase activity, which is required for its function in ER organization. The chain is Protein SEY1 from Coccidioides immitis (strain RS) (Valley fever fungus).